Consider the following 240-residue polypeptide: Ubiquinone biosynthesis O-methyltransferase (240 aa).

S-adenosyl-L-methionine contacts are provided by Arg-44, Gly-64, Asp-85, and Met-129.

The protein belongs to the methyltransferase superfamily. UbiG/COQ3 family.

The enzyme catalyses a 3-demethylubiquinol + S-adenosyl-L-methionine = a ubiquinol + S-adenosyl-L-homocysteine + H(+). The catalysed reaction is a 3-(all-trans-polyprenyl)benzene-1,2-diol + S-adenosyl-L-methionine = a 2-methoxy-6-(all-trans-polyprenyl)phenol + S-adenosyl-L-homocysteine + H(+). It functions in the pathway cofactor biosynthesis; ubiquinone biosynthesis. Its function is as follows. O-methyltransferase that catalyzes the 2 O-methylation steps in the ubiquinone biosynthetic pathway. This is Ubiquinone biosynthesis O-methyltransferase from Escherichia coli (strain K12 / MC4100 / BW2952).